Reading from the N-terminus, the 437-residue chain is Adenylosuccinate synthetase (437 aa).

Residues 25-31 (GDEGKGK), 53-55 (GHT), and K62 contribute to the GTP site. Residue D26 is the Proton acceptor of the active site. Residues D26 and G53 each contribute to the Mg(2+) site. IMP contacts are provided by residues 26-29 (DEGK) and 51-54 (NAGH). The Proton donor role is filled by H54. IMP is bound by residues T141, R155, N232, and T247. T307 contacts GTP. A substrate-binding site is contributed by 307–313 (TTTKRPR). Residue R311 participates in IMP binding. GTP is bound by residues R313, 339 to 341 (KLD), and 425 to 427 (GIG).

The protein belongs to the adenylosuccinate synthetase family. In terms of assembly, homodimer. The cofactor is Mg(2+).

The protein resides in the cytoplasm. The enzyme catalyses IMP + L-aspartate + GTP = N(6)-(1,2-dicarboxyethyl)-AMP + GDP + phosphate + 2 H(+). It functions in the pathway purine metabolism; AMP biosynthesis via de novo pathway; AMP from IMP: step 1/2. Plays an important role in the salvage pathway for purine nucleotide biosynthesis. Catalyzes the first committed step in the biosynthesis of AMP from IMP. This Plasmodium vivax (strain Salvador I) protein is Adenylosuccinate synthetase.